The chain runs to 326 residues: Ornithine carbamoyltransferase (326 aa).

Residues 57–60, Gln-84, Arg-108, and 135–138 each bind carbamoyl phosphate; these read STRT and HPTQ. L-ornithine-binding positions include Asn-169, Asp-233, and 237–238; that span reads SM. Position 275–276 (275–276) interacts with carbamoyl phosphate; that stretch reads CL.

It belongs to the aspartate/ornithine carbamoyltransferase superfamily. OTCase family.

The protein resides in the cytoplasm. It carries out the reaction carbamoyl phosphate + L-ornithine = L-citrulline + phosphate + H(+). It functions in the pathway amino-acid biosynthesis; L-arginine biosynthesis; L-arginine from L-ornithine and carbamoyl phosphate: step 1/3. Reversibly catalyzes the transfer of the carbamoyl group from carbamoyl phosphate (CP) to the N(epsilon) atom of ornithine (ORN) to produce L-citrulline. In Escherichia coli O6:K15:H31 (strain 536 / UPEC), this protein is Ornithine carbamoyltransferase.